The primary structure comprises 367 residues: Phosphoribosylaminoimidazole-succinocarboxamide synthase (367 aa).

The protein belongs to the SAICAR synthetase family.

It carries out the reaction 5-amino-1-(5-phospho-D-ribosyl)imidazole-4-carboxylate + L-aspartate + ATP = (2S)-2-[5-amino-1-(5-phospho-beta-D-ribosyl)imidazole-4-carboxamido]succinate + ADP + phosphate + 2 H(+). It participates in purine metabolism; IMP biosynthesis via de novo pathway; 5-amino-1-(5-phospho-D-ribosyl)imidazole-4-carboxamide from 5-amino-1-(5-phospho-D-ribosyl)imidazole-4-carboxylate: step 1/2. The polypeptide is Phosphoribosylaminoimidazole-succinocarboxamide synthase (Shewanella sp. (strain MR-4)).